Here is a 362-residue protein sequence, read N- to C-terminus: Peptide chain release factor 1 (362 aa).

Q237 carries the N5-methylglutamine modification.

This sequence belongs to the prokaryotic/mitochondrial release factor family. Post-translationally, methylated by PrmC. Methylation increases the termination efficiency of RF1.

It localises to the cytoplasm. In terms of biological role, peptide chain release factor 1 directs the termination of translation in response to the peptide chain termination codons UAG and UAA. In Aliivibrio fischeri (strain ATCC 700601 / ES114) (Vibrio fischeri), this protein is Peptide chain release factor 1.